The primary structure comprises 482 residues: tRNA sulfurtransferase (482 aa).

The region spanning 61 to 165 is the THUMP domain; the sequence is LAIRDALTRI…DDRLLLIKGR (105 aa). ATP-binding positions include 183 to 184, Lys265, Gly287, and Gln296; that span reads LI. An intrachain disulfide couples Cys344 to Cys456. The Rhodanese domain maps to 404–482; sequence FGPNDVILDI…GFNNVKVYRP (79 aa). Cys456 acts as the Cysteine persulfide intermediate in catalysis.

The protein belongs to the ThiI family.

It localises to the cytoplasm. It carries out the reaction [ThiI sulfur-carrier protein]-S-sulfanyl-L-cysteine + a uridine in tRNA + 2 reduced [2Fe-2S]-[ferredoxin] + ATP + H(+) = [ThiI sulfur-carrier protein]-L-cysteine + a 4-thiouridine in tRNA + 2 oxidized [2Fe-2S]-[ferredoxin] + AMP + diphosphate. The catalysed reaction is [ThiS sulfur-carrier protein]-C-terminal Gly-Gly-AMP + S-sulfanyl-L-cysteinyl-[cysteine desulfurase] + AH2 = [ThiS sulfur-carrier protein]-C-terminal-Gly-aminoethanethioate + L-cysteinyl-[cysteine desulfurase] + A + AMP + 2 H(+). It functions in the pathway cofactor biosynthesis; thiamine diphosphate biosynthesis. In terms of biological role, catalyzes the ATP-dependent transfer of a sulfur to tRNA to produce 4-thiouridine in position 8 of tRNAs, which functions as a near-UV photosensor. Also catalyzes the transfer of sulfur to the sulfur carrier protein ThiS, forming ThiS-thiocarboxylate. This is a step in the synthesis of thiazole, in the thiamine biosynthesis pathway. The sulfur is donated as persulfide by IscS. In Escherichia coli O127:H6 (strain E2348/69 / EPEC), this protein is tRNA sulfurtransferase.